We begin with the raw amino-acid sequence, 241 residues long: MADS-box transcription factor 57 (241 aa).

The 61-residue stretch at 1-61 (MGRGKIVIRR…GRLYEFSSTN (61 aa)) folds into the MADS-box domain. The K-box domain occupies 85–178 (IKIWQREAAS…LNVMSQQKLE (94 aa)). The tract at residues 216-241 (LELSQSQQREGECSKTAAPELGLHLP) is disordered.

As to quaternary structure, interacts with TB1. As to expression, expressed in seedling roots and shoots. Highly expressed in young leaves.

It is found in the nucleus. Transcriptional factor that targets the CArG motif 5'-C(A/T)TTAAAAAG-3' in the promoter of D14. Directly suppresses D14 expression to control the outgrowth of axillary buds. In Oryza sativa subsp. japonica (Rice), this protein is MADS-box transcription factor 57.